A 287-amino-acid polypeptide reads, in one-letter code: ATP synthase gamma chain (287 aa).

This sequence belongs to the ATPase gamma chain family. F-type ATPases have 2 components, CF(1) - the catalytic core - and CF(0) - the membrane proton channel. CF(1) has five subunits: alpha(3), beta(3), gamma(1), delta(1), epsilon(1). CF(0) has three main subunits: a, b and c.

It localises to the cell membrane. Produces ATP from ADP in the presence of a proton gradient across the membrane. The gamma chain is believed to be important in regulating ATPase activity and the flow of protons through the CF(0) complex. The sequence is that of ATP synthase gamma chain from Mycoplasmopsis agalactiae (strain NCTC 10123 / CIP 59.7 / PG2) (Mycoplasma agalactiae).